A 98-amino-acid polypeptide reads, in one-letter code: Integration host factor subunit alpha (98 aa).

Residues 49–71 form a disordered region; it reads FGNFDLRDKNQRPGRNPKTGEDI.

This sequence belongs to the bacterial histone-like protein family. In terms of assembly, heterodimer of an alpha and a beta chain.

In terms of biological role, this protein is one of the two subunits of integration host factor, a specific DNA-binding protein that functions in genetic recombination as well as in transcriptional and translational control. The polypeptide is Integration host factor subunit alpha (Shewanella sp. (strain ANA-3)).